A 216-amino-acid chain; its full sequence is Octanoyltransferase (216 aa).

The BPL/LPL catalytic domain occupies 29–209 (DRAGECVWLL…SFDAVFGPCP (181 aa)). Residues 68 to 75 (RGGQYTYH), 140 to 142 (AIG), and 153 to 155 (GFA) each bind substrate. Cys-171 (acyl-thioester intermediate) is an active-site residue.

This sequence belongs to the LipB family.

The protein localises to the cytoplasm. The enzyme catalyses octanoyl-[ACP] + L-lysyl-[protein] = N(6)-octanoyl-L-lysyl-[protein] + holo-[ACP] + H(+). It functions in the pathway protein modification; protein lipoylation via endogenous pathway; protein N(6)-(lipoyl)lysine from octanoyl-[acyl-carrier-protein]: step 1/2. Catalyzes the transfer of endogenously produced octanoic acid from octanoyl-acyl-carrier-protein onto the lipoyl domains of lipoate-dependent enzymes. Lipoyl-ACP can also act as a substrate although octanoyl-ACP is likely to be the physiological substrate. The chain is Octanoyltransferase from Rhodospirillum rubrum (strain ATCC 11170 / ATH 1.1.1 / DSM 467 / LMG 4362 / NCIMB 8255 / S1).